A 420-amino-acid chain; its full sequence is Nucleoporin NUP42 (420 aa).

Residues 1-25 (MTICQFFLQGRCRFGDRCWNEHPGA) form a C3H1-type zinc finger. One copy of the FG 1 repeat lies at 14–15 (FG). The interval 25–111 (ARGAGGARQP…FASPLSDEQK (87 aa)) is disordered. Residues 42-67 (SGNNRRGWNASSQRYSNVIQPSSFPK) are compositionally biased toward polar residues. FG repeat units follow at residues 82–83 (FG), 95–96 (FG), 218–219 (FG), 220–221 (FG), 228–229 (FG), 265–266 (FG), 271–272 (FG), 288–289 (FG), 345–346 (FG), and 364–365 (FG). Over residues 87–102 (SGASTSRGFGSSQNPF) the composition is skewed to polar residues. The disordered stretch occupies residues 323–345 (MAASPSGSTTAPPLRSGSSVVGF). Residues 365–420 (GGSGISTSVLASGAADNALFTPRDQLMKEELEQFQSQRFTLGKIPLKPPPVELLTV) form an interaction with GLE1 region.

In terms of assembly, probable component of the nuclear pore complex (NPC). Interacts with nuclear export protein NXF1. Interacts with GLE1. Able to form a heterotrimer with NUP155 and GLE1 in vitro. Interacts with XPO1. In terms of processing, O-glycosylated.

It is found in the nucleus. It localises to the nuclear pore complex. Its subcellular location is the nucleus membrane. Required for the export of mRNAs containing poly(A) tails from the nucleus into the cytoplasm. In Mus musculus (Mouse), this protein is Nucleoporin NUP42 (Nup42).